Here is a 34-residue protein sequence, read N- to C-terminus: Protamine-Z1/Z2 (34 aa).

Residues 1–34 (PRRRRRSSRPVRRRRRYRRSTAARRRRRVVRRRR) form a disordered region.

In terms of tissue distribution, testis.

The protein localises to the nucleus. It localises to the chromosome. Protamines substitute for histones in the chromatin of sperm during the haploid phase of spermatogenesis. They compact sperm DNA into a highly condensed, stable and inactive complex. The protein is Protamine-Z1/Z2 of Sarda orientalis (Striped bonito).